The following is a 240-amino-acid chain: tRNA (guanine-N(7)-)-methyltransferase (240 aa).

The segment at Met1 to Arg20 is disordered. Residues Glu70, Glu95, Asp122, and Asp145 each contribute to the S-adenosyl-L-methionine site. Asp145 is a catalytic residue. Residues Lys149, Asp181, and Thr218–Glu221 contribute to the substrate site.

Belongs to the class I-like SAM-binding methyltransferase superfamily. TrmB family.

The enzyme catalyses guanosine(46) in tRNA + S-adenosyl-L-methionine = N(7)-methylguanosine(46) in tRNA + S-adenosyl-L-homocysteine. It participates in tRNA modification; N(7)-methylguanine-tRNA biosynthesis. Functionally, catalyzes the formation of N(7)-methylguanine at position 46 (m7G46) in tRNA. This Pseudomonas putida (strain ATCC 700007 / DSM 6899 / JCM 31910 / BCRC 17059 / LMG 24140 / F1) protein is tRNA (guanine-N(7)-)-methyltransferase.